Consider the following 578-residue polypeptide: Tetratricopeptide repeat protein ttc-39B (578 aa).

TPR repeat units follow at residues 297–330 (AIMLFMKARLLLISGDIEAAIHYFNMSIESQDVY), 481–514 (CLYYFLKGVALRHLSLHAQAEECFKIVLERESSI), and 522–554 (PNATYELAMLRISEQQFMEAQTLLDKARAYKSY).

This is Tetratricopeptide repeat protein ttc-39B from Caenorhabditis elegans.